A 712-amino-acid chain; its full sequence is Polyribonucleotide nucleotidyltransferase (712 aa).

Positions 487 and 493 each coordinate Mg(2+). The KH domain occupies 554 to 613 (PRIEVMNIPVDKIREVIGSGGKVIREIVEKTGAKINIEDDGTVKIASSSGKEIEAARKWI). In terms of domain architecture, S1 motif spans 623–691 (GQIYEGTVVK…ERGKVRLSMK (69 aa)).

It belongs to the polyribonucleotide nucleotidyltransferase family. Mg(2+) serves as cofactor.

Its subcellular location is the cytoplasm. It catalyses the reaction RNA(n+1) + phosphate = RNA(n) + a ribonucleoside 5'-diphosphate. Its function is as follows. Involved in mRNA degradation. Catalyzes the phosphorolysis of single-stranded polyribonucleotides processively in the 3'- to 5'-direction. This is Polyribonucleotide nucleotidyltransferase from Rhizobium etli (strain ATCC 51251 / DSM 11541 / JCM 21823 / NBRC 15573 / CFN 42).